A 210-amino-acid chain; its full sequence is Large ribosomal subunit protein uL3 (210 aa).

The interval 119–151 (FQGAIKRHGQSRGPMSHGSRYHRRPGSMGPVAP) is disordered.

The protein belongs to the universal ribosomal protein uL3 family. In terms of assembly, part of the 50S ribosomal subunit. Forms a cluster with proteins L14 and L19.

Functionally, one of the primary rRNA binding proteins, it binds directly near the 3'-end of the 23S rRNA, where it nucleates assembly of the 50S subunit. In Bacillus cytotoxicus (strain DSM 22905 / CIP 110041 / 391-98 / NVH 391-98), this protein is Large ribosomal subunit protein uL3.